The sequence spans 387 residues: Homoserine O-succinyltransferase (387 aa).

The region spanning Asn49–Leu358 is the AB hydrolase-1 domain. Residue Ser156 is the Nucleophile of the active site. Arg226 is a binding site for substrate. Residues Asp321 and His354 contribute to the active site. Asp355 provides a ligand contact to substrate.

Belongs to the AB hydrolase superfamily. MetX family. In terms of assembly, homodimer.

Its subcellular location is the cytoplasm. It catalyses the reaction L-homoserine + succinyl-CoA = O-succinyl-L-homoserine + CoA. It functions in the pathway amino-acid biosynthesis; L-methionine biosynthesis via de novo pathway; O-succinyl-L-homoserine from L-homoserine: step 1/1. Its activity is regulated as follows. Requires MetW for activity. Transfers a succinyl group from succinyl-CoA to L-homoserine, forming succinyl-L-homoserine. This is Homoserine O-succinyltransferase from Acinetobacter baylyi (strain ATCC 33305 / BD413 / ADP1).